The sequence spans 551 residues: Arginine--tRNA ligase (551 aa).

The short motif at 125 to 135 (ANPTGPLHIGH) is the 'HIGH' region element.

It belongs to the class-I aminoacyl-tRNA synthetase family. As to quaternary structure, monomer.

It is found in the cytoplasm. The enzyme catalyses tRNA(Arg) + L-arginine + ATP = L-arginyl-tRNA(Arg) + AMP + diphosphate. This is Arginine--tRNA ligase from Oleidesulfovibrio alaskensis (strain ATCC BAA-1058 / DSM 17464 / G20) (Desulfovibrio alaskensis).